The sequence spans 258 residues: Acetylglutamate kinase (258 aa).

Substrate-binding positions include 41–42 (GG), arginine 63, and asparagine 156.

This sequence belongs to the acetylglutamate kinase family. ArgB subfamily. In terms of assembly, homodimer.

It is found in the cytoplasm. It carries out the reaction N-acetyl-L-glutamate + ATP = N-acetyl-L-glutamyl 5-phosphate + ADP. It functions in the pathway amino-acid biosynthesis; L-arginine biosynthesis; N(2)-acetyl-L-ornithine from L-glutamate: step 2/4. Catalyzes the ATP-dependent phosphorylation of N-acetyl-L-glutamate. This chain is Acetylglutamate kinase, found in Geobacillus stearothermophilus (Bacillus stearothermophilus).